The primary structure comprises 740 residues: Vacuolar protein sorting-associated protein 51 homolog (740 aa).

Coiled-coil stretches lie at residues 65-87 and 322-344; these read SATDTIRRMKDDFKQMETDVNLL and RALDRLHRRLQAMRNICRGLEVQ.

Belongs to the VPS51 family. In terms of assembly, component of the Golgi-associated retrograde protein (GARP) complex.

In terms of biological role, may act as a component of the GARP complex that is involved in retrograde transport from early and late endosomes to the trans-Golgi network (TGN). This is Vacuolar protein sorting-associated protein 51 homolog from Drosophila melanogaster (Fruit fly).